Here is a 452-residue protein sequence, read N- to C-terminus: 1,3-beta-glucanosyltransferase gel1 (452 aa).

Positions 1-19 (MKASAVTAALAVGASTVLA) are cleaved as a signal peptide. C71 and C100 are oxidised to a cystine. Residues Y89, N159, E160, D201, and R206 each coordinate (1,3-beta-D-glucosyl)n. Catalysis depends on E160, which acts as the Proton donor. Disulfide bonds link C215/C345 and C233/C264. A glycan (N-linked (GlcNAc...) asparagine) is linked at N249. E261 serves as the catalytic Nucleophile. Residue Y292 participates in (1,3-beta-D-glucosyl)n binding. Residues 325-340 (EKTSNPSGDGNYNKTG) show a composition bias toward polar residues. A disordered region spans residues 325 to 419 (EKTSNPSGDG…SGTSTSSKGA (95 aa)). The N-linked (GlcNAc...) asparagine glycan is linked to N337. Positions 393 to 419 (STATAEPGSGSATGSSSSGTSTSSKGA) are enriched in low complexity. The GPI-like-anchor amidated alanine moiety is linked to residue A419. Positions 420–452 (AAGLTVPSLTMAPVVVGAVTLLSTVFGAGLVLL) are cleaved as a propeptide — removed in mature form.

It belongs to the glycosyl hydrolase 72 family. The GPI-like anchor contains a phosphoceramide lipid group. The anchor position has not been determined.

It localises to the cell membrane. Its function is as follows. Splits internally a 1,3-beta-glucan molecule and transfers the newly generated reducing end (the donor) to the non-reducing end of another 1,3-beta-glucan molecule (the acceptor) forming a 1,3-beta linkage, resulting in the elongation of 1,3-beta-glucan chains in the cell wall. Involved in cell wall morphogenesis. The polypeptide is 1,3-beta-glucanosyltransferase gel1 (gel1) (Aspergillus fumigatus (strain CBS 144.89 / FGSC A1163 / CEA10) (Neosartorya fumigata)).